The chain runs to 339 residues: MVREKVRISTRTLQWKCVESRADSKRLYYGRFILSPLMKGQADTIGIAMRRALLGEIEGTCITRAKSKKIPHEFSTITGIQESIHEILMNLKEIVLRSNLYGTHDASICVKGPGCVTAQDIILPPSVEIIDNTQHIASLREPIDLHIGLEIERNRGYCMKPPKNFQDGSYSIDAVFMPVRNANHSVHSYGNGNEKQEILFLEIWTNGSLTPKEALHEASRNLIDLFIPFLHAEEENFHLEKNQHKITLPLFAFHDRLAKLRKNQKEIALKSIFIDQLELAPKIYNCLKRSNIHTLWDLLKNSQEDLMKIEHFRIEDVKHIFGILKIEKHFTINLPKNKF.

The interval methionine 1 to glutamate 233 is alpha N-terminal domain (alpha-NTD). Residues isoleucine 267–phenylalanine 339 form an alpha C-terminal domain (alpha-CTD) region.

This sequence belongs to the RNA polymerase alpha chain family. In plastids the minimal PEP RNA polymerase catalytic core is composed of four subunits: alpha, beta, beta', and beta''. When a (nuclear-encoded) sigma factor is associated with the core the holoenzyme is formed, which can initiate transcription.

Its subcellular location is the plastid. The protein resides in the chloroplast. It carries out the reaction RNA(n) + a ribonucleoside 5'-triphosphate = RNA(n+1) + diphosphate. In terms of biological role, DNA-dependent RNA polymerase catalyzes the transcription of DNA into RNA using the four ribonucleoside triphosphates as substrates. The sequence is that of DNA-directed RNA polymerase subunit alpha from Populus trichocarpa (Western balsam poplar).